A 112-amino-acid polypeptide reads, in one-letter code: DNA-binding protein Mboo_1886 (112 aa).

The protein belongs to the PDCD5 family.

The protein is DNA-binding protein Mboo_1886 of Methanoregula boonei (strain DSM 21154 / JCM 14090 / 6A8).